Reading from the N-terminus, the 213-residue chain is Oxidase ustYa (213 aa).

The disordered stretch occupies residues 1 to 26 (MAERSSNGYKEVPVRQSEESTIAEEE). The chain crosses the membrane as a helical span at residues 48–68 (AVWFLIALLLLSNIGLLGGLI). Asparagine 98 carries N-linked (GlcNAc...) asparagine glycosylation. Short sequence motifs (HXXHC) lie at residues 123 to 127 (HQLHC) and 150 to 154 (HLMHC).

It belongs to the ustYa family.

The protein resides in the membrane. It participates in mycotoxin biosynthesis. Its function is as follows. Oxidase; part of the gene cluster that mediates the biosynthesis of the secondary metabolite ustiloxin B, an antimitotic tetrapeptide. First, ustA is processed by the subtilisin-like endoprotease Kex2 that is outside the ustiloxin B gene cluster, at the C-terminal side of Arg-Lys, after transfer to Golgi apparatus through the endoplasmic reticulum (ER). Cleavage by KEX2 generates 16 peptides YAIG-I to YAIG-XVI. To process the precursor peptide further, at least two peptidases are necessary to cleave the N-terminal and C-terminal sides of the Tyr-Ala-Ile-Gly core peptide which serves as backbone for the synthesis of ustiloxin B, through cyclization and modification of the tyrosine with a non-protein coding amino acid, norvaline. One of the two peptidases must be the serine peptidase ustP; and the other pepdidase is probably ustH. Macrocyclization of the core peptide derived from ustA requires the tyrosinase ustQ, as well as the homologous oxidases ustYa and ustYb, and leads to the production of the first cyclization product N-desmethylustiloxin F. For the formation of N-desmethylustiloxin F, three oxidation steps are required, hydroxylation at the benzylic position, hydroxylation at either the aromatic ring of Tyr or beta-position of Ile, and oxidative cyclization. UstQ may catalyze the oxidation of a phenol moiety, whereas the ustYa and ustYb are most likely responsible for the remaining two-step oxidations. N-desmethylustiloxin F is then methylated by ustM to yield ustiloxin F which in turn substrate of the cytochrome P450 monooxygenase ustC which catalyzes the formation of S-deoxyustiloxin H. The flavoprotein monooxygenases ustF1 and ustF2 then participate in the modification of the side chain of S-deoxyustiloxin H, leading to the synthesis of an oxime intermediate, via ustiloxin H. Finally, carboxylative dehydration performed by the cysteine desulfurase-like protein ustD yields ustiloxin B. This Aspergillus flavus (strain ATCC 200026 / FGSC A1120 / IAM 13836 / NRRL 3357 / JCM 12722 / SRRC 167) protein is Oxidase ustYa.